Consider the following 500-residue polypeptide: Keratin, type II cuticular Hb1 (500 aa).

The head stretch occupies residues 1–106 (MTCGSGFRGR…PNAQCVKQEE (106 aa)). Residues 106 to 417 (EKEQIKCLNN…RLLEGEEQRL (312 aa)) form the IF rod domain. Residues 107 to 141 (KEQIKCLNNRFAAFIDKVRFLEQQNKLLETKLQFY) are coil 1A. The segment at 142–151 (QNRQCCESNL) is linker 1. Positions 152-252 (EPLFNGYIET…YEEEIRVLQA (101 aa)) are coil 1B. Lys212 is covalently cross-linked (Glycyl lysine isopeptide (Lys-Gly) (interchain with G-Cter in SUMO1)). Residues 253–269 (HISDTSVIVKMDNSRDL) are linker 12. The segment at 270 to 413 (NMDNIVAEIK…ATYRRLLEGE (144 aa)) is coil 2. The tract at residues 414–500 (EQRLCEGVGS…GSCASVCRKC (87 aa)) is tail.

This sequence belongs to the intermediate filament family. Heterotetramer of two type I and two type II keratins.

In Bos taurus (Bovine), this protein is Keratin, type II cuticular Hb1.